The primary structure comprises 785 residues: Endonuclease MutS2 (785 aa).

Position 334–341 (334–341 (GPNTGGKT)) interacts with ATP. Residues 710–785 (LDLRGQRYDE…GNGATIVKLK (76 aa)) enclose the Smr domain.

It belongs to the DNA mismatch repair MutS family. MutS2 subfamily. As to quaternary structure, homodimer. Binds to stalled ribosomes, contacting rRNA.

In terms of biological role, endonuclease that is involved in the suppression of homologous recombination and thus may have a key role in the control of bacterial genetic diversity. Functionally, acts as a ribosome collision sensor, splitting the ribosome into its 2 subunits. Detects stalled/collided 70S ribosomes which it binds and splits by an ATP-hydrolysis driven conformational change. Acts upstream of the ribosome quality control system (RQC), a ribosome-associated complex that mediates the extraction of incompletely synthesized nascent chains from stalled ribosomes and their subsequent degradation. Probably generates substrates for RQC. The polypeptide is Endonuclease MutS2 (Lactobacillus helveticus (strain DPC 4571)).